Here is a 133-residue protein sequence, read N- to C-terminus: Bacteriohemerythrin (133 aa).

Positions 19, 56, 60, 75, 79, 115, and 120 each coordinate Fe cation.

It belongs to the hemerythrin family. Monomer.

Functionally, oxygen-binding protein. May be involved in a storage mechanism or for delivery to oxygen-requiring enzymes. The oxygen-binding site contains two iron atoms. The protein is Bacteriohemerythrin of Campylobacter jejuni subsp. jejuni serotype O:6 (strain 81116 / NCTC 11828).